Consider the following 261-residue polypeptide: Methyl-coenzyme M reductase subunit gamma (261 aa).

Position 123 (arginine 123) interacts with coenzyme M.

This sequence belongs to the methyl-coenzyme M reductase gamma subunit family. As to quaternary structure, MCR is a hexamer of two alpha, two beta, and two gamma chains, forming a dimer of heterotrimers. It depends on coenzyme F430 as a cofactor.

It is found in the cytoplasm. It catalyses the reaction coenzyme B + methyl-coenzyme M = methane + coenzyme M-coenzyme B heterodisulfide. Its pathway is one-carbon metabolism; methyl-coenzyme M reduction; methane from methyl-coenzyme M: step 1/1. Functionally, component of the methyl-coenzyme M reductase (MCR) I that catalyzes the reductive cleavage of methyl-coenzyme M (CoM-S-CH3 or 2-(methylthio)ethanesulfonate) using coenzyme B (CoB or 7-mercaptoheptanoylthreonine phosphate) as reductant which results in the production of methane and the mixed heterodisulfide of CoB and CoM (CoM-S-S-CoB). This is the final step in methanogenesis. The chain is Methyl-coenzyme M reductase subunit gamma (mcrG) from Methanococcus voltae.